A 448-amino-acid chain; its full sequence is Exoglucanase GH7B (448 aa).

The signal sequence occupies residues 1-17 (MSLAVVFLLGFLAVSHG). Pyrrolidone carboxylic acid is present on Gln-18. Cystine bridges form between Cys-62–Cys-83 and Cys-73–Cys-79. Residues Tyr-97, 119–120 (DI), and Lys-197 each bind substrate. 6 disulfides stabilise this stretch: Cys-154/Cys-415, Cys-188/Cys-226, Cys-192/Cys-225, Cys-246/Cys-271, Cys-254/Cys-259, and Cys-276/Cys-350. Glu-228 acts as the Nucleophile in catalysis. Substrate-binding positions include 230 to 233 (DIWE) and His-244. Glu-233 functions as the Proton donor/acceptor in the catalytic mechanism. Arg-266 and Asp-274 together coordinate substrate. Positions 396 and 412 each coordinate substrate.

The protein belongs to the glycosyl hydrolase 7 (cellulase C) family. Monomer. Highly expressed in the hepatopancreas (at protein level). Little or no expression detected in the hindgut or the rest of the body (at protein level).

The protein localises to the secreted. It carries out the reaction Hydrolysis of (1-&gt;4)-beta-D-glucosidic linkages in cellulose and cellotetraose, releasing cellobiose from the non-reducing ends of the chains.. Functionally, exocellobiohydrolase (CBH) that catalyzes the hydrolysis of 1,4-beta-D-glucosidic bonds in cellulose to release the disaccharide cellobiose. The degradation of cellulose involves an interplay between different cellulolytic enzymes. Hydrolysis starts with endoglucanases (EGs), which cut internal beta-1,4-glucosidic bonds in cellulose to reduce the polymerization degree of the substrate and create new chain ends for exocellobiohydrolases (CBHs). The CBHs release the disaccharide cellobiose from the non-reducing end of the cellulose polymer chain. Finally, beta-1,4-glucosidases hydrolyze the cellobiose and other short cello-oligosaccharides into glucose units. This chain is Exoglucanase GH7B, found in Limnoria quadripunctata (Gribble).